The following is a 123-amino-acid chain: WAP four-disulfide core domain protein 5 (123 aa).

The N-terminal stretch at 1-24 (MRIQSLLLLGALLAVGSQLPAVFG) is a signal peptide. WAP domains lie at 27-73 (KGEK…CVPR) and 74-121 (VSVK…RDPA). 8 disulfides stabilise this stretch: Cys34/Cys62, Cys41/Cys66, Cys49/Cys61, Cys55/Cys70, Cys81/Cys109, Cys88/Cys113, Cys96/Cys108, and Cys102/Cys117.

The protein resides in the secreted. Its function is as follows. Putative acid-stable proteinase inhibitor. The polypeptide is WAP four-disulfide core domain protein 5 (WFDC5) (Pongo abelii (Sumatran orangutan)).